We begin with the raw amino-acid sequence, 422 residues long: 2-(3-amino-3-carboxypropyl)histidine synthase subunit 1 (422 aa).

[4Fe-4S] cluster is bound by residues Cys-128, Cys-234, and Cys-363.

This sequence belongs to the DPH1/DPH2 family. DPH1 subfamily. In terms of assembly, component of the 2-(3-amino-3-carboxypropyl)histidine synthase complex composed of DPH1, DPH2, DPH3 and a NADH-dependent reductase, predominantly CBR1. [4Fe-4S] cluster is required as a cofactor.

The protein localises to the cytoplasm. The enzyme catalyses L-histidyl-[translation elongation factor 2] + S-adenosyl-L-methionine = 2-[(3S)-amino-3-carboxypropyl]-L-histidyl-[translation elongation factor 2] + S-methyl-5'-thioadenosine + H(+). Its pathway is protein modification; peptidyl-diphthamide biosynthesis. Functionally, catalyzes the first step of diphthamide biosynthesis, a post-translational modification of histidine which occurs in elongation factor 2. DPH1 and DPH2 transfer a 3-amino-3-carboxypropyl (ACP) group from S-adenosyl-L-methionine (SAM) to a histidine residue, the reaction is assisted by a reduction system comprising DPH3 and a NADH-dependent reductase, predominantly CBR1. This Kluyveromyces lactis (strain ATCC 8585 / CBS 2359 / DSM 70799 / NBRC 1267 / NRRL Y-1140 / WM37) (Yeast) protein is 2-(3-amino-3-carboxypropyl)histidine synthase subunit 1 (DPH1).